The sequence spans 781 residues: Catenin beta-1 (781 aa).

Ala2 bears the N-acetylalanine mark. Positions 2–23 (ATQADLMELDMAMEPDRKAAVS) are interaction with VCL. Ser23 bears the Phosphoserine; by GSK3-beta; alternate mark. Ser23 carries an O-linked (GlcNAc) serine; alternate glycan. Position 29 is a phosphoserine; by GSK3-beta (Ser29). A phosphoserine; by GSK3-beta and HIPK2 mark is found at Ser33 and Ser37. The disordered stretch occupies residues 34–57 (GIHSGATTTAPSLSGKGNPEEEDV). Position 41 is a phosphothreonine; by GSK3-beta (Thr41). Ser45 carries the phosphoserine modification. Residue Lys49 is modified to N6-acetyllysine. Residue Tyr64 is modified to Phosphotyrosine; by PTK6. Tyr142 is subject to Phosphotyrosine; by FYN and PTK6. 12 ARM repeats span residues 151–191 (RAIP…IMRS), 193–234 (QMVS…IFKS), 235–276 (GGIP…VRLA), 277–318 (GGLQ…ILAS), 319–360 (GGPQ…IVEA), 361–389 (GGMQ…RNLS), 400–441 (GLLG…VCQV), 442–484 (GGIE…AQNA), 489–530 (YGLP…LREQ), 531–571 (GAIP…EIVE), 594–636 (NTIP…AEGA), and 637–666 (TAPL…SEDK). The interval 156–178 (LTKLLNDEDQVVVNKAAVMVHQL) is interaction with BCL9. At Ser191 the chain carries Phosphoserine; by CDK5. Ser246 carries the post-translational modification Phosphoserine; by CDK5. Tyr331 is modified (phosphotyrosine; by PTK6). Tyr333 carries the phosphotyrosine; by SRC and PTK6 modification. Position 552 is a phosphoserine (Ser552). Thr556 carries the (Microbial infection) Phosphothreonine modification. Residue Thr556 is modified to Phosphothreonine. Position 619 is an S-nitrosocysteine (Cys619). Ser675 bears the Phosphoserine mark. The disordered stretch occupies residues 705-781 (EPLGYRQDDP…NQLAWFDTDL (77 aa)). The span at 734-745 (MMEHEMGGHHPG) shows a compositional bias: basic and acidic residues. The interaction with SCRIB stretch occupies residues 772–781 (NQLAWFDTDL).

Belongs to the beta-catenin family. In terms of assembly, two separate complex-associated pools are found in the cytoplasm. The majority is present as component of an E-cadherin:catenin adhesion complex composed of at least E-cadherin/CDH1 and beta-catenin/CTNNB1, and possibly alpha-catenin/CTNNA1; the complex is located to adherens junctions. The stable association of CTNNA1 is controversial as CTNNA1 was shown not to bind to F-actin when assembled in the complex. Alternatively, the CTNNA1-containing complex may be linked to F-actin by other proteins such as LIMA1. Another cytoplasmic pool is part of a large complex containing AXIN1, AXIN2, APC, CSNK1A1 and GSK3B that promotes phosphorylation on N-terminal Ser and Thr residues and ubiquitination of CTNNB1 via BTRC and its subsequent degradation by the proteasome. Wnt-dependent activation of DVL antagonizes the action of GSK3B. When GSK3B activity is inhibited the complex dissociates, CTNNB1 is dephosphorylated and is no longer targeted for destruction. The stabilized protein translocates to the nucleus, where it binds TCF/LEF-1 family members, BCL9, BCL9L and possibly also RUVBL1 and CHD8. Binds CTNNBIP and EP300. CTNNB1 forms a ternary complex with LEF1 and EP300 that is disrupted by CTNNBIP1 binding. Interacts with TAX1BP3 (via the PDZ domain); this interaction inhibits the transcriptional activity of CTNNB1. Interacts with AJAP1, BAIAP1, CARM1, CTNNA3, CXADR and PCDH11Y. Binds NHERF1. Interacts with GLIS2 and MUC1. Interacts with SLC30A9. Interacts with XIRP1. Interacts directly with AXIN1; the interaction is regulated by CDK2 phosphorylation of AXIN1. Interacts with SCRIB. Interacts with RAPGEF2. Interacts with PTPRU (via the cytoplasmic juxtamembrane domain). Interacts with EMD. Interacts with TNIK and TCF7L2. Interacts with SESTD1 and TRPC4. Interacts with CAV1. Interacts with TRPV4. The TRPV4 and CTNNB1 complex can interact with CDH1. Interacts with VCL. Interacts with PTPRJ. Interacts with PKT7 and CDK2. Interacts with FAT1 (via the cytoplasmic domain). Interacts with NANOS1 and NDRG2. Interacts with isoform 1 of NEK2. Interacts with both isoform 1 and isoform 2 of CDK5. Interacts with PTK6. Interacts with SOX7; this interaction may lead to proteasomal degradation of active CTNNB1 and thus inhibition of Wnt/beta-catenin-stimulated transcription. Identified in a complex with HINT1 and MITF. Interacts with FHIT. The CTNNB1 and TCF7L2/TCF4 complex interacts with PML (isoform PML-4). Interacts with FERMT2. Identified in a complex with TCF7L2/TCF4 and FERMT2. Interacts with RORA. May interact with P-cadherin/CDH3. Interacts with RNF220. Interacts with CTNND2. Interacts (via the C-terminal region) with CBY1. The complex composed, at least, of APC, CTNNB1 and GSK3B interacts with JPT1; the interaction requires the inactive form of GSK3B (phosphorylated at 'Ser-9'). Interacts with DLG5. Interacts with FAM53B; promoting translocation to the nucleus. Interacts with TMEM170B. Interacts with AHI1. Interacts with GID8. Component of an cadherin:catenin adhesion complex composed of at least of CDH26, beta-catenin/CTNNB1, alpha-catenin/CTNNA1 and p120 catenin/CTNND1. Forms a complex comprising APPL1, RUVBL2, APPL2, HDAC1 and HDAC2. Interacts with IRF2BPL; mediates the ubiquitination and degradation of CTNNB1. Interacts with AMFR. Interacts with LMBR1L. Interacts with SOX30; prevents interaction of CTNNB1 with TCF7L2/TCF4 and leads to inhibition of Wnt signaling. Interacts with SOX9; inhibiting CTNNB1 activity by competing with the binding sites of TCF/LEF within CTNNB1, thereby inhibiting the Wnt signaling. Interacts with SPN/CD43 cytoplasmic tail. Interacts (when phosphorylated at Tyr-333) with isoform M2 of PKM (PKM2); promoting transcription activation. Interacts with PKP2 (via HEAD domain). Interacts with CDH1. Interacts (when unphosphorylated) with FLYWCH1, perhaps preventing interaction of CTNNB1 with TCF4, and thereby regulating transcription activation; phosphorylation of CTNNB1 may inhibit the interaction. Interacts (via the central armadillo domains) with probable transcriptional regulator ADNP (via N-terminal region); interaction is direct and stabilizes CTNNB1 by modulating its phosphorylation by glycogen synthase kinase-3 beta GSK3B. Interacts with NR5A2. Interacts with DSG2; the interaction promotes localization of CTNNB1 at cell junctions thus reducing its nuclear localization and subsequent transcription of CTNNB1/TCF-target genes. As to quaternary structure, (Microbial infection) Interacts with herpes virus 8 protein vPK; this interaction inhibits the Wnt signaling pathway. Phosphorylation at Ser-552 by AMPK promotes stabilization of the protein, enhancing TCF/LEF-mediated transcription. Phosphorylation by GSK3B requires prior phosphorylation of Ser-45 by another kinase. Phosphorylation proceeds then from Thr-41 to Ser-37 and Ser-33. Phosphorylated by NEK2. EGF stimulates tyrosine phosphorylation. Phosphorylated on Ser-33 and Ser-37 by HIPK2 and GSK3B, this phosphorylation triggers proteasomal degradation. Phosphorylation on Ser-191 and Ser-246 by CDK5. Phosphorylation by CDK2 regulates insulin internalization. Phosphorylation by PTK6 at Tyr-64, Tyr-142, Tyr-331 and/or Tyr-333 with the predominant site at Tyr-64 is not essential for inhibition of transcriptional activity. Phosphorylation by SRC at Tyr-333 promotes interaction with isoform M2 of PKM (PKM2); promoting transcription activation. Post-translationally, ubiquitinated by the SCF(BTRC) E3 ligase complex when phosphorylated by GSK3B, leading to its degradation. Ubiquitinated by a E3 ubiquitin ligase complex containing UBE2D1, SIAH1, CACYBP/SIP, SKP1, APC and TBL1X, leading to its subsequent proteasomal degradation. Ubiquitinated and degraded following interaction with SOX9. Ubiquitinated via 'Lys-11'- and 'Lys-29'-linked ubiquitin chains by UBR5, leading to its stabilization. In terms of processing, S-nitrosylation at Cys-619 within adherens junctions promotes VEGF-induced, NO-dependent endothelial cell permeability by disrupting interaction with E-cadherin, thus mediating disassembly adherens junctions. O-glycosylation at Ser-23 decreases nuclear localization and transcriptional activity, and increases localization to the plasma membrane and interaction with E-cadherin CDH1. Post-translationally, deacetylated at Lys-49 by SIRT1. In terms of processing, phosphorylated at Thr-556 by herpes virus 1/HHV-1 leading to CTNNB1 inhibition. In terms of tissue distribution, expressed in several hair follicle cell types: basal and peripheral matrix cells, and cells of the outer and inner root sheaths. Expressed in colon. Present in cortical neurons (at protein level). Expressed in breast cancer tissues (at protein level).

It is found in the cytoplasm. It localises to the nucleus. Its subcellular location is the cytoskeleton. The protein localises to the cell junction. The protein resides in the adherens junction. It is found in the cell membrane. It localises to the microtubule organizing center. Its subcellular location is the centrosome. The protein localises to the spindle pole. The protein resides in the synapse. It is found in the cilium basal body. Functionally, key downstream component of the canonical Wnt signaling pathway. In the absence of Wnt, forms a complex with AXIN1, AXIN2, APC, CSNK1A1 and GSK3B that promotes phosphorylation on N-terminal Ser and Thr residues and ubiquitination of CTNNB1 via BTRC and its subsequent degradation by the proteasome. In the presence of Wnt ligand, CTNNB1 is not ubiquitinated and accumulates in the nucleus, where it acts as a coactivator for transcription factors of the TCF/LEF family, leading to activate Wnt responsive genes. Also acts as a coactivator for other transcription factors, such as NR5A2. Promotes epithelial to mesenchymal transition/mesenchymal to epithelial transition (EMT/MET) via driving transcription of CTNNB1/TCF-target genes. Involved in the regulation of cell adhesion, as component of an E-cadherin:catenin adhesion complex. Acts as a negative regulator of centrosome cohesion. Involved in the CDK2/PTPN6/CTNNB1/CEACAM1 pathway of insulin internalization. Blocks anoikis of malignant kidney and intestinal epithelial cells and promotes their anchorage-independent growth by down-regulating DAPK2. Disrupts PML function and PML-NB formation by inhibiting RANBP2-mediated sumoylation of PML. Promotes neurogenesis by maintaining sympathetic neuroblasts within the cell cycle. Involved in chondrocyte differentiation via interaction with SOX9: SOX9-binding competes with the binding sites of TCF/LEF within CTNNB1, thereby inhibiting the Wnt signaling. Acts as a positive regulator of odontoblast differentiation during mesenchymal tooth germ formation, via promoting the transcription of differentiation factors such as LEF1, BMP2 and BMP4. Activity is repressed in a MSX1-mediated manner at the bell stage of mesenchymal tooth germ formation which prevents premature differentiation of odontoblasts. The chain is Catenin beta-1 from Homo sapiens (Human).